A 487-amino-acid chain; its full sequence is Probable aspartic-type endopeptidase opsB (487 aa).

A signal peptide spans 1-20; the sequence is MQKSWLVLLVACLGLQGTTA. Residues 69–398 form the Peptidase A1 domain; the sequence is YFCNITLGTP…DLSNNEISLA (330 aa). An N-linked (GlcNAc...) asparagine glycan is attached at asparagine 72. Aspartate 87 is an active-site residue. N-linked (GlcNAc...) asparagine glycans are attached at residues asparagine 99, asparagine 111, asparagine 132, and asparagine 272. Aspartate 286 is a catalytic residue. Asparagine 329 and asparagine 403 each carry an N-linked (GlcNAc...) asparagine glycan. Residue alanine 463 is the site of GPI-anchor amidated alanine attachment. Positions 464-487 are cleaved as a propeptide — removed in mature form; sequence PAGPTDVPKHLVLGAAAIGYVLAF.

This sequence belongs to the peptidase A1 family.

The protein localises to the cell membrane. Probable GPI-anchored aspartic-type endopeptidase. The protein is Probable aspartic-type endopeptidase opsB (opsB) of Aspergillus oryzae (strain ATCC 42149 / RIB 40) (Yellow koji mold).